A 257-amino-acid chain; its full sequence is Ribosome-associated protein quality control protein P2 (257 aa).

Residues 1–74 are N-terminal domain; sequence MSDIYQHFRK…RAERKRAILF (74 aa). Residues 87–166 form a central region region; sequence LQAFNVRYAD…EKIDLSDLNI (80 aa). The region spanning 181–251 is the S4 RNA-binding domain; the sequence is LRLDAVCASM…GKTKKDKWRV (71 aa).

As to quaternary structure, in the presence of chloramphenicol (a translation elongation inhibitor), but not erythromycin or lincomycin, associates with 50S ribosomal subunits with or without a tRNA in the P-site. The S4 domain binds in a similar position to RqcP.

Its subcellular location is the cytoplasm. Part of the ribosome quality control system (RQC), a ribosome-associated complex that mediates the extraction of incompletely synthesized nascent chains from stalled ribosomes and their subsequent degradation. RqcH recruits Ala-charged tRNA, and with RqcP directs the elongation of stalled nascent chains on 50S ribosomal subunits, leading to non-templated C-terminal alanine extensions (Ala tail). The Ala tail promotes nascent chain degradation. RqcP2 (YlmH) overexpression can compensate for RqcP's role in Ala tailing during RQC, restoring Ala tail addition to peptides in stalled ribosomes. Overexpression complements a double ssrA-rqcP double deletion, but not an ssrA-rqcH double deletion. In terms of biological role, the majority of tagged protein is associated with tRNA-less 50S subunits, suggesting it might also play a role in late stage 50S subunit biogenesis. This is Ribosome-associated protein quality control protein P2 from Bacillus subtilis (strain 168).